A 464-amino-acid chain; its full sequence is MNEVCLKLSDLFVSSGWGGYDRGRAPQWAHPRAQQQWFGAIAALEPFLRQTLPNVGGELPGICLTGPAPVLKDAVLVRNFYQGIATPWEEFSPWPCLAGEESEWSAVPPMREIPLFPQDPLAEEQFCWLMTPQFGLLLLLGKNEQGLAQFYWTFDPEILQQAWLSLQARLKYGLSPDLSLLQKTIAAFNFPQPDFRLVTYFGQLMLDYQPNPYNLPPCQEQESAEPSPDVELLQALTHEVRTPLTSIRTLTKLLLRRKDLSPEVLKRIESIDRECSDQISRMDLIFRATELESTPLPELVVPLTVTSLEAVFQAGIPRWQKQAQRYNVNLQAQIPHSLPQVWSNPSLLDQVLGGMIEKFVRNFNGGGEINLQITTAGDQLKVQFHTQSVHQANPVRALGELLMFQPQTGCLSLNWDVTKNLFQLLGGKLIVRRRSPSEEILTIYLKCEQRTVPVANYDRQFTMV.

One can recognise a Histidine kinase domain in the interval 235–449; it reads ALTHEVRTPL…ILTIYLKCEQ (215 aa). At His238 the chain carries Phosphohistidine; by autocatalysis.

In terms of processing, when expressed in E.coli autophosphorylates at 18 to 30 degrees Celsius; less phosphorylation occurs at 36 and none occurs at 42 or 48 degrees Celsius.

The enzyme catalyses ATP + protein L-histidine = ADP + protein N-phospho-L-histidine.. In terms of biological role, member of a two-component system Hik34/Rre1, controlling expression of at least 20 genes in response to hyperosmotic stress (0.5 M sorbitol) or salt (0.5 M NaCl). Represses expression of heat shock genes under normal growth conditions. Required for survival of long-term heat shock exposure. This is Sensor histidine kinase Hik34 from Synechocystis sp. (strain ATCC 27184 / PCC 6803 / Kazusa).